The sequence spans 228 residues: Probable calcium-binding protein CML48 (228 aa).

EF-hand domains follow at residues 52 to 87 (ETHP…SGYD) and 121 to 156 (NCLA…LGCV). Positions 65, 67, 69, and 76 each coordinate Ca(2+).

In terms of biological role, potential calcium sensor. The sequence is that of Probable calcium-binding protein CML48 (CML48) from Arabidopsis thaliana (Mouse-ear cress).